The chain runs to 86 residues: Large ribosomal subunit protein bL31B (86 aa).

Belongs to the bacterial ribosomal protein bL31 family. Type B subfamily. In terms of assembly, part of the 50S ribosomal subunit.

The chain is Large ribosomal subunit protein bL31B from Vibrio vulnificus (strain CMCP6).